We begin with the raw amino-acid sequence, 266 residues long: Chymotrypsin-like elastase family member 1 (266 aa).

The signal sequence occupies residues 1-16; sequence MLRFLVFASLVLYGHS. Residues 17–26 constitute a propeptide, activation peptide; the sequence is TQDFPETNAR. Residues 27 to 264 form the Peptidase S1 domain; it reads VVGGAEARRN…YISWMNNVIA (238 aa). Cys56 and Cys72 form a disulfide bridge. The active-site Charge relay system is His71. Positions 85, 87, 90, and 95 each coordinate Ca(2+). Asp119 acts as the Charge relay system in catalysis. Cystine bridges form between Cys153/Cys220, Cys184/Cys200, and Cys210/Cys240. Ser214 acts as the Charge relay system in catalysis.

Belongs to the peptidase S1 family. Elastase subfamily. The cofactor is Ca(2+). Pancreas.

It is found in the secreted. The catalysed reaction is Hydrolysis of proteins, including elastin. Preferential cleavage: Ala-|-Xaa.. Functionally, serine proteases that hydrolyze many proteins in addition to elastin. The protein is Chymotrypsin-like elastase family member 1 (Cela1) of Rattus norvegicus (Rat).